Consider the following 680-residue polypeptide: Forkhead box protein P4 (680 aa).

Positions 1–17 are enriched in polar residues; that stretch reads MMVESASETIRSAPSGQ. Residues 1–56 are disordered; sequence MMVESASETIRSAPSGQNGVGSLSGQADGSSGGATGTTASGTGREVTTGADSNGEM. Residues serine 52 and serine 86 each carry the phosphoserine modification. Residues lysine 175 and lysine 246 each participate in a glycyl lysine isopeptide (Lys-Gly) (interchain with G-Cter in SUMO2) cross-link. Positions 262–306 are disordered; that stretch reads FAAPPKVSPPLSHHTLPNGQPTVLTSRRDSSSHEETPGSHPLYGH. The span at 276–286 shows a compositional bias: polar residues; sequence TLPNGQPTVLT. The span at 287–298 shows a compositional bias: basic and acidic residues; it reads SRRDSSSHEETP. The C2H2-type zinc-finger motif lies at 307–332; sequence GECKWPGCETLCEDLGQFIKHLNTEH. The leucine-zipper stretch occupies residues 349 to 370; that stretch reads VQQLEIQLAKESERLQAMMAHL. Lysine 378 participates in a covalent cross-link: Glycyl lysine isopeptide (Lys-Gly) (interchain with G-Cter in SUMO2). A disordered region spans residues 407–445; that stretch reads GLVHPPTSAAAPVTPLRPPGLGSASLHGGGPARRRSSDK. Positions 467–559 form a DNA-binding region, fork-head; that stretch reads RPPFTYASLI…KMTGSPTLVK (93 aa). A Phosphoserine modification is found at serine 554. Residues 602 to 680 form a disordered region; sequence PLSHDDVGAP…EEELPGEELS (79 aa). Residues 617–635 are compositionally biased toward polar residues; the sequence is SNGSSSPPRLSPPQYSHQV. Residues 668-680 are compositionally biased toward acidic residues; sequence RDLEEELPGEELS.

As to quaternary structure, forms homodimers and heterodimers with FOXP1 and FOXP2. Dimerization is required for DNA-binding.

The protein localises to the nucleus. In terms of biological role, transcriptional repressor that represses lung-specific expression. The polypeptide is Forkhead box protein P4 (FOXP4) (Homo sapiens (Human)).